The following is a 302-amino-acid chain: MNNERLRRTMMFVPGNNPAMVKDAGIFGADSIMFDLEDAVSLAEKDSARYLVYEALQTVDYGSSELVVRINGLDTPFYKNDIKAMVKAGIDVIRLPKVETAAMMHELESLITDAEKEFGRPVGTTHMMAAIESALGVVNAVEIANASDRMIGIALSAEDYTTDMKTHRYPDGQELLYARNVILHAARAAGIAAFDTVFTNLNDEEGFYRETQLIHQLGFDGKSLINPRQIEMVNKVYAPTEKEINNAQNVIAAIEEAKQKGSGVISMNGQMVDRPVVLRAQRVMKLANANHLVDSEGNYIEK.

Arg-69 and Glu-132 together coordinate substrate. Residues Glu-132 and Asp-159 each contribute to the Mg(2+) site.

The protein belongs to the HpcH/HpaI aldolase family. Citrate lyase beta subunit subfamily. Oligomer with a subunit composition of (alpha,beta,gamma)6. Mg(2+) serves as cofactor.

It is found in the cytoplasm. It carries out the reaction citrate = oxaloacetate + acetate. The catalysed reaction is (3S)-citryl-CoA = oxaloacetate + acetyl-CoA. In terms of biological role, represents a citryl-ACP lyase. This chain is Citrate lyase subunit beta (citE), found in Leuconostoc mesenteroides subsp. cremoris.